The sequence spans 69 residues: MNKQEFYVLIERDEDGIYIGEVPQLKACYSQGETIDELMQNIREVIELCLEEIELESTSEFIGIQKVVV.

It belongs to the UPF0150 family.

This Synechocystis sp. (strain ATCC 27184 / PCC 6803 / Kazusa) protein is UPF0150 protein ssr1258.